Reading from the N-terminus, the 403-residue chain is Argininosuccinate synthase (403 aa).

Residues 10-18 (AYSGGLDTS) and Ala-37 contribute to the ATP site. L-citrulline is bound by residues Tyr-88 and Ser-93. Gly-118 is an ATP binding site. Positions 120, 124, and 125 each coordinate L-aspartate. Residue Asn-124 coordinates L-citrulline. L-citrulline-binding residues include Arg-128, Ser-178, Ser-187, Glu-263, and Tyr-275.

This sequence belongs to the argininosuccinate synthase family. Type 1 subfamily. Homotetramer.

The protein localises to the cytoplasm. The catalysed reaction is L-citrulline + L-aspartate + ATP = 2-(N(omega)-L-arginino)succinate + AMP + diphosphate + H(+). The protein operates within amino-acid biosynthesis; L-arginine biosynthesis; L-arginine from L-ornithine and carbamoyl phosphate: step 2/3. This Marinobacter nauticus (strain ATCC 700491 / DSM 11845 / VT8) (Marinobacter aquaeolei) protein is Argininosuccinate synthase.